The sequence spans 1092 residues: Probable cellulose synthase A catalytic subunit 6 [UDP-forming] (1092 aa).

The Cytoplasmic segment spans residues 1–280 (MEASAGLVAG…SSSRINPYRM (280 aa)). Zn(2+) contacts are provided by cysteine 42, cysteine 45, cysteine 61, cysteine 64, cysteine 69, cysteine 72, cysteine 84, and cysteine 87. The segment at 42–88 (CQICGDDVGEGPDGEPFVACNECAFPVCRNCYDYERREGSQACPQCK) adopts an RING-type; degenerate zinc-finger fold. The segment at 100 to 123 (VAGDEEEDGVDDLEGEFGLDGRED) is disordered. Residues 103–116 (DEEEDGVDDLEGEF) are compositionally biased toward acidic residues. A helical membrane pass occupies residues 281 to 301 (IIIIRLVVLGFFFHYRVMHPV). The Extracellular segment spans residues 302 to 303 (ND). A helical membrane pass occupies residues 304–324 (AFALWLISVICEIWFAMSWIL). The Cytoplasmic portion of the chain corresponds to 325–868 (DQFPKWLPIE…FLERFSYINS (544 aa)). The UDP-alpha-D-glucose site is built by serine 363, lysine 369, glutamate 370, and aspartate 399. Aspartate 399 is an active-site residue. Residues 453 to 480 (VRERRAMKRDYEEFKVRINALVAKAQKV) are a coiled coil. Residue lysine 540 coordinates UDP-alpha-D-glucose. Mn(2+) is bound by residues lysine 541 and aspartate 565. Aspartate 792 is an active-site residue. The helical transmembrane segment at 869 to 889 (IVYPWTSIPLLAYCTLPAICL) threads the bilayer. The Extracellular segment spans residues 890-901 (LTGKFITPELTN). The helical transmembrane segment at 902 to 922 (VASLWFMSLFICIFVTGILEM) threads the bilayer. Topologically, residues 923–937 (RWSGVAIDDWWRNEQ) are cytoplasmic. The chain crosses the membrane as a helical span at residues 938-958 (FWVIGGVSSHLFAVFQGLLKV). At 959-987 (LAGVDTSFTVTSKAGDDEEFSELYTFKWT) the chain is on the extracellular side. A helical membrane pass occupies residues 988-1008 (TLLIPPTTLLLLNFIGVVAGV). Residues 1009 to 1019 (SNAINNGYESW) are Cytoplasmic-facing. The chain crosses the membrane as a helical span at residues 1020 to 1040 (GPLFGKLFFAFWVIVHLYPFL). The Extracellular portion of the chain corresponds to 1041–1049 (KGLVGRQNR). Residues 1050-1070 (TPTIVIVWSILLASIFSLLWV) traverse the membrane as a helical segment. Over 1071–1092 (RIDPFLAKNNGPLLEECGLDCN) the chain is Cytoplasmic.

It belongs to the glycosyltransferase 2 family. Plant cellulose synthase subfamily. Mn(2+) is required as a cofactor. Requires Zn(2+) as cofactor.

The protein localises to the cell membrane. It catalyses the reaction [(1-&gt;4)-beta-D-glucosyl](n) + UDP-alpha-D-glucose = [(1-&gt;4)-beta-D-glucosyl](n+1) + UDP + H(+). It participates in glycan metabolism; plant cellulose biosynthesis. Its function is as follows. Probable catalytic subunit of cellulose synthase terminal complexes ('rosettes'), required for beta-1,4-glucan microfibril crystallization, a major mechanism of the cell wall formation. This is Probable cellulose synthase A catalytic subunit 6 [UDP-forming] (CESA6) from Oryza sativa subsp. japonica (Rice).